The chain runs to 612 residues: Chaperone protein DnaK (612 aa).

Phosphothreonine; by autocatalysis is present on Thr-174. Residues 578 to 612 are disordered; that stretch reads GGQTGGATNTDSAGQGTTQDNVYEANYKVEDDDNK. Residues 586 to 598 are compositionally biased toward polar residues; sequence NTDSAGQGTTQDN.

It belongs to the heat shock protein 70 family.

In terms of biological role, acts as a chaperone. The polypeptide is Chaperone protein DnaK (Thermoanaerobacter sp. (strain X514)).